A 22-amino-acid chain; its full sequence is FFGSIIGALAKGLPSLISLIKK.

Lysine amide is present on lysine 22.

Expressed by the skin glands.

It localises to the secreted. Antimicrobial peptide. Active against Gram-negative bacterium E.coli (MIC=6 uM) and against Gram-positive bacterium S.aureus (MIC=12.5 uM). The sequence is that of Brevinin-1OKc from Nidirana okinavana (Kampira Falls frog).